A 524-amino-acid polypeptide reads, in one-letter code: Nickel-binding periplasmic protein (524 aa).

The first 22 residues, M1–A22, serve as a signal peptide directing secretion.

Belongs to the bacterial solute-binding protein 5 family.

It is found in the periplasm. Functionally, involved in a nickel transport system, probably represents the nickel binder. This Escherichia coli (strain K12) protein is Nickel-binding periplasmic protein (nikA).